Here is a 467-residue protein sequence, read N- to C-terminus: UDP-N-acetylmuramate--L-alanine ligase (467 aa).

Residue 114–120 (GTHGKTT) coordinates ATP.

This sequence belongs to the MurCDEF family.

It localises to the cytoplasm. The enzyme catalyses UDP-N-acetyl-alpha-D-muramate + L-alanine + ATP = UDP-N-acetyl-alpha-D-muramoyl-L-alanine + ADP + phosphate + H(+). The protein operates within cell wall biogenesis; peptidoglycan biosynthesis. Cell wall formation. The sequence is that of UDP-N-acetylmuramate--L-alanine ligase from Nitrobacter hamburgensis (strain DSM 10229 / NCIMB 13809 / X14).